The following is a 193-amino-acid chain: Adenine phosphoribosyltransferase (193 aa).

Belongs to the purine/pyrimidine phosphoribosyltransferase family. Homodimer.

Its subcellular location is the cytoplasm. The catalysed reaction is AMP + diphosphate = 5-phospho-alpha-D-ribose 1-diphosphate + adenine. It participates in purine metabolism; AMP biosynthesis via salvage pathway; AMP from adenine: step 1/1. Catalyzes a salvage reaction resulting in the formation of AMP, that is energically less costly than de novo synthesis. In Bifidobacterium longum (strain NCC 2705), this protein is Adenine phosphoribosyltransferase.